Here is a 288-residue protein sequence, read N- to C-terminus: ATP synthase gamma chain (288 aa).

This sequence belongs to the ATPase gamma chain family. In terms of assembly, F-type ATPases have 2 components, CF(1) - the catalytic core - and CF(0) - the membrane proton channel. CF(1) has five subunits: alpha(3), beta(3), gamma(1), delta(1), epsilon(1). CF(0) has three main subunits: a, b and c.

It is found in the cell membrane. Its function is as follows. Produces ATP from ADP in the presence of a proton gradient across the membrane. The gamma chain is believed to be important in regulating ATPase activity and the flow of protons through the CF(0) complex. This chain is ATP synthase gamma chain, found in Bacillus pumilus (strain SAFR-032).